Here is a 252-residue protein sequence, read N- to C-terminus: MELVGFLCVAVAVLTWGFLRVWNSAERMRSPEQAGLPGAGSRALVVIAHPDDEAMFFAPTMLGLARLEQQVSLLCFSSGNYYNQGEIRKKELLQSCAVLGIPPSRVMIIDKRDFPDDPEVQWDTELVASTLLQHIHANGTDLVVTFDAEGVSGHSNHIALYKAVRALHSGGKLPKGCSVLTLQSVNALRKYAFLLDLPWTLLSPQDVLFVLTSKEVAQAKKAMSCHRSQLLWFRYLYVLFSRYMRINSLRFL.

The chain crosses the membrane as a helical span at residues 2-22 (ELVGFLCVAVAVLTWGFLRVW). The Cytoplasmic segment spans residues 23-252 (NSAERMRSPE…YMRINSLRFL (230 aa)).

The protein belongs to the PIGL family.

The protein localises to the endoplasmic reticulum membrane. It catalyses the reaction a 6-(N-acetyl-alpha-D-glucosaminyl)-1-(1,2-diacyl-sn-glycero-3-phospho)-1D-myo-inositol + H2O = a 6-(alpha-D-glucosaminyl)-1-(1,2-diacyl-sn-glycero-3-phospho)-1D-myo-inositol + acetate. The protein operates within glycolipid biosynthesis; glycosylphosphatidylinositol-anchor biosynthesis. In terms of biological role, catalyzes the second step of glycosylphosphatidylinositol (GPI) biosynthesis, which is the de-N-acetylation of N-acetylglucosaminyl-phosphatidylinositol. This Mus musculus (Mouse) protein is N-acetylglucosaminyl-phosphatidylinositol de-N-acetylase (Pigl).